Here is a 191-residue protein sequence, read N- to C-terminus: Peptidyl-tRNA hydrolase (191 aa).

Residue Tyr17 participates in tRNA binding. The active-site Proton acceptor is His22. 3 residues coordinate tRNA: Tyr68, Asn70, and Asn116.

Belongs to the PTH family. As to quaternary structure, monomer.

The protein localises to the cytoplasm. The enzyme catalyses an N-acyl-L-alpha-aminoacyl-tRNA + H2O = an N-acyl-L-amino acid + a tRNA + H(+). Hydrolyzes ribosome-free peptidyl-tRNAs (with 1 or more amino acids incorporated), which drop off the ribosome during protein synthesis, or as a result of ribosome stalling. Its function is as follows. Catalyzes the release of premature peptidyl moieties from peptidyl-tRNA molecules trapped in stalled 50S ribosomal subunits, and thus maintains levels of free tRNAs and 50S ribosomes. The sequence is that of Peptidyl-tRNA hydrolase from Mycolicibacterium smegmatis (strain ATCC 700084 / mc(2)155) (Mycobacterium smegmatis).